Reading from the N-terminus, the 337-residue chain is Ketol-acid reductoisomerase (NADP(+)) (337 aa).

A KARI N-terminal Rossmann domain is found at 1 to 180 (MQVYYDKDAD…GGTKGGVIET (180 aa)). Residues 24–27 (YGSQ), arginine 47, and serine 51 contribute to the NADP(+) site. Residue histidine 106 is part of the active site. An NADP(+)-binding site is contributed by glycine 132. Positions 181–326 (TFREETETDL…ARLRAMMPWI (146 aa)) constitute a KARI C-terminal knotted domain. Mg(2+) is bound by residues aspartate 189, glutamate 193, glutamate 225, and glutamate 229. Serine 250 contacts substrate.

The protein belongs to the ketol-acid reductoisomerase family. Mg(2+) serves as cofactor.

The enzyme catalyses (2R)-2,3-dihydroxy-3-methylbutanoate + NADP(+) = (2S)-2-acetolactate + NADPH + H(+). The catalysed reaction is (2R,3R)-2,3-dihydroxy-3-methylpentanoate + NADP(+) = (S)-2-ethyl-2-hydroxy-3-oxobutanoate + NADPH + H(+). It participates in amino-acid biosynthesis; L-isoleucine biosynthesis; L-isoleucine from 2-oxobutanoate: step 2/4. The protein operates within amino-acid biosynthesis; L-valine biosynthesis; L-valine from pyruvate: step 2/4. Involved in the biosynthesis of branched-chain amino acids (BCAA). Catalyzes an alkyl-migration followed by a ketol-acid reduction of (S)-2-acetolactate (S2AL) to yield (R)-2,3-dihydroxy-isovalerate. In the isomerase reaction, S2AL is rearranged via a Mg-dependent methyl migration to produce 3-hydroxy-3-methyl-2-ketobutyrate (HMKB). In the reductase reaction, this 2-ketoacid undergoes a metal-dependent reduction by NADPH to yield (R)-2,3-dihydroxy-isovalerate. The sequence is that of Ketol-acid reductoisomerase (NADP(+)) from Neisseria gonorrhoeae (strain ATCC 700825 / FA 1090).